We begin with the raw amino-acid sequence, 608 residues long: ATP-citrate synthase beta chain protein 1 (608 aa).

ATP contacts are provided by residues 214-234 (ILRFNNIPQIKMVVVLGELGG) and 265-291 (FKSEVQFGHAGAKSGGEMESAQAKNQA). Residue Glu231 participates in Mg(2+) binding. His273 serves as the catalytic Tele-phosphohistidine intermediate. Residue 292-302 (LQDAGATVPTS) participates in CoA binding.

This sequence belongs to the succinate/malate CoA ligase alpha subunit family. Heterooctamer of 4 alpha and 4 beta chains.

It is found in the cytoplasm. Its subcellular location is the cytosol. It carries out the reaction oxaloacetate + acetyl-CoA + ADP + phosphate = citrate + ATP + CoA. Functionally, ATP citrate-lyase is the primary enzyme responsible for the synthesis of cytosolic acetyl-CoA, used for the elongation of fatty acids and biosynthesis of isoprenoids, flavonoids and malonated derivatives. May supply substrate to the cytosolic acetyl-CoA carboxylase, which generates the malonyl-CoA used for the synthesis of a multitude of compounds, including very long chain fatty acids and flavonoids. Required for normal growth and development and elongation of C18 fatty acids to C20 to C24 fatty acids in seeds. In contrast to all known animal ACL enzymes having a homomeric structure, plant ACLs are composed of alpha and beta chains. This chain is ATP-citrate synthase beta chain protein 1 (ACLB-1), found in Arabidopsis thaliana (Mouse-ear cress).